The following is a 670-amino-acid chain: RxLR effector protein PSR2 (670 aa).

Positions 1 to 17 (MRLQCVVLFAALTLVAA) are cleaved as a signal peptide. The RxLR-dEER motif lies at 39-54 (RLLRPGNPAGKEDEER). The N-linked (GlcNAc...) asparagine glycan is linked to Asn57. A WY1 repeat occupies 79–126 (KLLKWADAKKPPETVFTRLRLDKTGTQLFDNTDFPVWAAYTRSVAQTD). The interval 79 to 670 (KLLKWADAKK…YSAKFKVRWG (592 aa)) is 7 X 93 AA tandem repeats. The stretch at 127-217 (SEASAVMLKT…NYMKLSNKEN (91 aa)) is one LWY2 repeat. Residues 218–308 (PKAQTTLIAT…KYINYYNKEN (91 aa)) form an LWY3 repeat. The LWY4 repeat unit spans residues 309–399 (PDEKTTVLAK…KYTENFNLNK (91 aa)). One copy of the LWY5 repeat lies at 400–492 (EINEQVTAIQ…KFLEKYNTAN (93 aa)). An LWY6 repeat occupies 493–583 (PGKEQTMISG…KYLNAFNDKA (91 aa)). The stretch at 584–670 (PVKKALMIDT…YSAKFKVRWG (87 aa)) is one LWY7 repeat.

The protein belongs to the RxLR effector family. As to quaternary structure, interacts with host dsRNA-binding protein DRB4.

It is found in the secreted. The protein localises to the host cell. Its function is as follows. Secreted effector that possesses RNA silencing suppression activity by inhibiting the biogenesis of small RNAs in the host plant to promote enhanced susceptibility of host to the pathogen during infection. Interferes with secondary siRNA production by associating with host dsRNA-binding protein DRB4. Inhibits the host salicylic acid pathway during infection. The sequence is that of RxLR effector protein PSR2 from Phytophthora sojae (Soybean stem and root rot agent).